The chain runs to 104 residues: Flagellar hook-basal body complex protein FliE (104 aa).

This sequence belongs to the FliE family.

Its subcellular location is the bacterial flagellum basal body. This Escherichia coli O139:H28 (strain E24377A / ETEC) protein is Flagellar hook-basal body complex protein FliE.